The sequence spans 74 residues: Large ribosomal subunit protein bL31 (74 aa).

Zn(2+)-binding residues include Cys-16, Cys-18, Cys-38, and Cys-41.

Belongs to the bacterial ribosomal protein bL31 family. Type A subfamily. As to quaternary structure, part of the 50S ribosomal subunit. Zn(2+) serves as cofactor.

Its function is as follows. Binds the 23S rRNA. The chain is Large ribosomal subunit protein bL31 from Mycolicibacterium vanbaalenii (strain DSM 7251 / JCM 13017 / BCRC 16820 / KCTC 9966 / NRRL B-24157 / PYR-1) (Mycobacterium vanbaalenii).